A 363-amino-acid polypeptide reads, in one-letter code: Protein-glutamate methylesterase/protein-glutamine glutaminase 2 (363 aa).

One can recognise a Response regulatory domain in the interval 7-124 (RVLVVDDSAL…SLTLENVADE (118 aa)). The residue at position 58 (aspartate 58) is a 4-aspartylphosphate. The CheB-type methylesterase domain maps to 160 to 357 (PVASRTTPSK…NLLMVQSAAQ (198 aa)). Residues serine 176, histidine 203, and aspartate 299 contribute to the active site.

Belongs to the CheB family. Post-translationally, phosphorylated by CheA. Phosphorylation of the N-terminal regulatory domain activates the methylesterase activity.

It localises to the cytoplasm. The catalysed reaction is [protein]-L-glutamate 5-O-methyl ester + H2O = L-glutamyl-[protein] + methanol + H(+). It catalyses the reaction L-glutaminyl-[protein] + H2O = L-glutamyl-[protein] + NH4(+). Functionally, involved in chemotaxis. Part of a chemotaxis signal transduction system that modulates chemotaxis in response to various stimuli. Catalyzes the demethylation of specific methylglutamate residues introduced into the chemoreceptors (methyl-accepting chemotaxis proteins or MCP) by CheR. Also mediates the irreversible deamidation of specific glutamine residues to glutamic acid. The polypeptide is Protein-glutamate methylesterase/protein-glutamine glutaminase 2 (Koribacter versatilis (strain Ellin345)).